Consider the following 668-residue polypeptide: Fructose-1,6-bisphosphatase class 3 (668 aa).

This sequence belongs to the FBPase class 3 family. It depends on Mn(2+) as a cofactor.

The enzyme catalyses beta-D-fructose 1,6-bisphosphate + H2O = beta-D-fructose 6-phosphate + phosphate. Its pathway is carbohydrate biosynthesis; gluconeogenesis. In Clostridium botulinum (strain ATCC 19397 / Type A), this protein is Fructose-1,6-bisphosphatase class 3.